The chain runs to 380 residues: Cytochrome b (380 aa).

A run of 4 helical transmembrane segments spans residues 33-53 (FGSL…FLAM), 77-98 (WLIR…YLHI), 113-133 (WNIG…GYVL), and 178-198 (FFAF…LHFF). Heme b is bound by residues His83 and His97. Heme b-binding residues include His182 and His196. A ubiquinone is bound at residue His201. A run of 4 helical transmembrane segments spans residues 226-246 (YKDL…SFFS), 288-308 (LGGV…PILH), 320-340 (LTQL…WIGG), and 347-367 (FIAV…ILIP).

The protein belongs to the cytochrome b family. The cytochrome bc1 complex contains 3 respiratory subunits (MT-CYB, CYC1 and UQCRFS1), 2 core proteins (UQCRC1 and UQCRC2) and probably 6 low-molecular weight proteins. Heme b is required as a cofactor.

The protein localises to the mitochondrion inner membrane. Its function is as follows. Component of the ubiquinol-cytochrome c reductase complex (complex III or cytochrome b-c1 complex) that is part of the mitochondrial respiratory chain. The b-c1 complex mediates electron transfer from ubiquinol to cytochrome c. Contributes to the generation of a proton gradient across the mitochondrial membrane that is then used for ATP synthesis. The chain is Cytochrome b (mt-cyb) from Zenopsis nebulosa (Mirror dory).